We begin with the raw amino-acid sequence, 138 residues long: uncharacterized protein (138 aa).

This is an uncharacterized protein from Saccharomyces cerevisiae (strain ATCC 204508 / S288c) (Baker's yeast).